The chain runs to 240 residues: Guanine nucleotide exchange factor sopE2 (240 aa).

The tract at residues 78–240 (LTSKTVKDFM…IANKYLQNAS (163 aa)) is GEF catalytic domain.

It belongs to the GEF (guanine exchange factor) SopE family.

The protein resides in the secreted. Activator for CDC42 by directly engaging this Rho GTPase and acting as potent guanine nucleotide exchange factor (GEF). This activation results in actin cytoskeleton rearrangements and stimulates membrane ruffling, promoting bacterial entry into non-phagocytic cells. Also activates NF-kB, p38 and ERK kinases, which are known to be involved in the induction of IL-8 expression. Chaperone InvB is required for secretion, translocation and stabilization of intracellular levels of sopE2. The polypeptide is Guanine nucleotide exchange factor sopE2 (sopE2) (Salmonella typhimurium (strain LT2 / SGSC1412 / ATCC 700720)).